A 288-amino-acid polypeptide reads, in one-letter code: Bifunctional protein FolD (288 aa).

NADP(+) is bound by residues Gly166–Ser168 and Ile232.

It belongs to the tetrahydrofolate dehydrogenase/cyclohydrolase family. Homodimer.

It carries out the reaction (6R)-5,10-methylene-5,6,7,8-tetrahydrofolate + NADP(+) = (6R)-5,10-methenyltetrahydrofolate + NADPH. The catalysed reaction is (6R)-5,10-methenyltetrahydrofolate + H2O = (6R)-10-formyltetrahydrofolate + H(+). It participates in one-carbon metabolism; tetrahydrofolate interconversion. Its function is as follows. Catalyzes the oxidation of 5,10-methylenetetrahydrofolate to 5,10-methenyltetrahydrofolate and then the hydrolysis of 5,10-methenyltetrahydrofolate to 10-formyltetrahydrofolate. The polypeptide is Bifunctional protein FolD (Acidithiobacillus ferrooxidans (strain ATCC 23270 / DSM 14882 / CIP 104768 / NCIMB 8455) (Ferrobacillus ferrooxidans (strain ATCC 23270))).